The sequence spans 1216 residues: ATP-dependent helicase/nuclease subunit A (1216 aa).

Positions 26-488 (QKKTAEQIEA…ILLKANFRSS (463 aa)) constitute a UvrD-like helicase ATP-binding domain. ATP is bound at residue 47 to 54 (ASAGSGKT). The region spanning 515 to 802 (KHQLVFANTK…ELMTIHKSKG (288 aa)) is the UvrD-like helicase C-terminal domain.

The protein belongs to the helicase family. AddA subfamily. In terms of assembly, heterodimer of AddA and AddB/RexB. Mg(2+) serves as cofactor.

The catalysed reaction is Couples ATP hydrolysis with the unwinding of duplex DNA by translocating in the 3'-5' direction.. It catalyses the reaction ATP + H2O = ADP + phosphate + H(+). In terms of biological role, the heterodimer acts as both an ATP-dependent DNA helicase and an ATP-dependent, dual-direction single-stranded exonuclease. Recognizes the chi site generating a DNA molecule suitable for the initiation of homologous recombination. The AddA nuclease domain is required for chi fragment generation; this subunit has the helicase and 3' -&gt; 5' nuclease activities. The protein is ATP-dependent helicase/nuclease subunit A of Streptococcus pneumoniae (strain ATCC 700669 / Spain 23F-1).